Here is a 237-residue protein sequence, read N- to C-terminus: Proteasome subunit alpha type-5-A (237 aa).

Met1 carries the N-acetylmethionine modification. Residues Lys43 and Lys66 each participate in a glycyl lysine isopeptide (Lys-Gly) (interchain with G-Cter in ubiquitin) cross-link.

It belongs to the peptidase T1A family. Component of the 20S core complex of the 26S proteasome. The 26S proteasome is composed of a core protease (CP), known as the 20S proteasome, capped at one or both ends by the 19S regulatory particle (RP/PA700). The 20S proteasome core is composed of 28 subunits that are arranged in four stacked rings, resulting in a barrel-shaped structure. The two end rings are each formed by seven alpha subunits, and the two central rings are each formed by seven beta subunits. The catalytic chamber with the active sites is on the inside of the barrel.

The protein localises to the cytoplasm. Its subcellular location is the nucleus. The proteasome is a multicatalytic proteinase complex which is characterized by its ability to cleave peptides with Arg, Phe, Tyr, Leu, and Glu adjacent to the leaving group at neutral or slightly basic pH. The proteasome has an ATP-dependent proteolytic activity. This is Proteasome subunit alpha type-5-A (PAE1) from Arabidopsis thaliana (Mouse-ear cress).